The following is a 76-amino-acid chain: Vasotab-TY2 (76 aa).

A signal peptide spans 1 to 21; that stretch reads MKFALFSVLVLMLIATFVAAD. The region spanning 22-76 is the Kazal-like domain; the sequence is DCPRICTADYTPVCGTPSGGRRSANRTFANQCGLDSHNCLNKGATYDKLHDGECK. 3 cysteine pairs are disulfide-bonded: Cys23–Cys60, Cys27–Cys53, and Cys35–Cys75.

As to expression, expressed by the salivary gland.

It is found in the secreted. Vasodilator protein that inhibits vasoconstriction of isolated rat femoral artery induced by phenylephrine. Since platelet aggregation and vasoconstriction are key hemostatic responses, particularly in small wounds, this protein likely participates in the antihemostatic responses during blood feeding. Blocks L-type calcium channels (Cav1/CACNA1) in left ventricular myocytes isolated from rat hearts. The protein is Vasotab-TY2 of Tabanus yao (Horsefly).